The following is a 96-amino-acid chain: Pterin-4-alpha-carbinolamine dehydratase (96 aa).

This sequence belongs to the pterin-4-alpha-carbinolamine dehydratase family.

The protein localises to the spore wall. The catalysed reaction is (4aS,6R)-4a-hydroxy-L-erythro-5,6,7,8-tetrahydrobiopterin = (6R)-L-erythro-6,7-dihydrobiopterin + H2O. Functionally, has a role in spore wall formation. This is Pterin-4-alpha-carbinolamine dehydratase (omt2) from Schizosaccharomyces pombe (strain 972 / ATCC 24843) (Fission yeast).